We begin with the raw amino-acid sequence, 255 residues long: Trans-aconitate 2-methyltransferase (255 aa).

The protein belongs to the methyltransferase superfamily. Tam family.

The protein resides in the cytoplasm. It carries out the reaction trans-aconitate + S-adenosyl-L-methionine = (E)-3-(methoxycarbonyl)pent-2-enedioate + S-adenosyl-L-homocysteine. In terms of biological role, catalyzes the S-adenosylmethionine monomethyl esterification of trans-aconitate. This Mycolicibacterium gilvum (strain PYR-GCK) (Mycobacterium gilvum (strain PYR-GCK)) protein is Trans-aconitate 2-methyltransferase.